The chain runs to 465 residues: Probable citrate synthase, mitochondrial (465 aa).

Residues His-303, His-349, and Asp-404 contribute to the active site.

The protein belongs to the citrate synthase family. Homodimer.

The protein localises to the mitochondrion matrix. The catalysed reaction is oxaloacetate + acetyl-CoA + H2O = citrate + CoA + H(+). The protein operates within carbohydrate metabolism; tricarboxylic acid cycle; isocitrate from oxaloacetate: step 1/2. The sequence is that of Probable citrate synthase, mitochondrial from Glossina morsitans morsitans (Savannah tsetse fly).